A 158-amino-acid chain; its full sequence is Regulator of sigma D (158 aa).

The protein belongs to the Rsd/AlgQ family. As to quaternary structure, interacts with RpoD.

The protein resides in the cytoplasm. Binds RpoD and negatively regulates RpoD-mediated transcription activation by preventing the interaction between the primary sigma factor RpoD with the catalytic core of the RNA polymerase and with promoter DNA. May be involved in replacement of the RNA polymerase sigma subunit from RpoD to RpoS during the transition from exponential growth to the stationary phase. The chain is Regulator of sigma D from Escherichia fergusonii (strain ATCC 35469 / DSM 13698 / CCUG 18766 / IAM 14443 / JCM 21226 / LMG 7866 / NBRC 102419 / NCTC 12128 / CDC 0568-73).